The sequence spans 276 residues: WIMGHMVNAIYQIDEFVNLGANSIETDVSFDDSANPEYTYHGVPCDCRRWCKKWEYFNNFLKALREATTPGDSKYHEKLVLVVFDLKTNSLYDHQAYDAGKKLAKNLLQHYWNNGNNGGRAYIVLSIPNLSHYKLITGFKETLKNEGHPELMEKVGFDFSGNDNIDQVAKAYKKAGVTGHVWQSDGITNCIASFIRGLDRAKEAVANRDSSNGFINKVYYWTVDKRATTREALDAEVDGIMTNDPDVIADVLNESAYKAKFRIATYDDNPWETFKK.

The active site involves His-5. Positions 25 and 27 each coordinate Mg(2+). His-41 functions as the Nucleophile in the catalytic mechanism. 2 disulfide bridges follow: Cys-45/Cys-51 and Cys-47/Cys-190. Asp-85 serves as a coordination point for Mg(2+). N-linked (GlcNAc...) asparagine glycans are attached at residues Asn-129 and Asn-253.

It belongs to the arthropod phospholipase D family. Class II subfamily. Mg(2+) serves as cofactor. As to expression, expressed by the venom gland.

It is found in the secreted. The enzyme catalyses an N-(acyl)-sphingosylphosphocholine = an N-(acyl)-sphingosyl-1,3-cyclic phosphate + choline. It catalyses the reaction an N-(acyl)-sphingosylphosphoethanolamine = an N-(acyl)-sphingosyl-1,3-cyclic phosphate + ethanolamine. It carries out the reaction a 1-acyl-sn-glycero-3-phosphocholine = a 1-acyl-sn-glycero-2,3-cyclic phosphate + choline. The catalysed reaction is a 1-acyl-sn-glycero-3-phosphoethanolamine = a 1-acyl-sn-glycero-2,3-cyclic phosphate + ethanolamine. In terms of biological role, dermonecrotic toxins cleave the phosphodiester linkage between the phosphate and headgroup of certain phospholipids (sphingolipid and lysolipid substrates), forming an alcohol (often choline) and a cyclic phosphate. This toxin acts on sphingomyelin (SM). It may also act on ceramide phosphoethanolamine (CPE), lysophosphatidylcholine (LPC) and lysophosphatidylethanolamine (LPE), but not on lysophosphatidylserine (LPS), and lysophosphatidylglycerol (LPG). It acts by transphosphatidylation, releasing exclusively cyclic phosphate products as second products. Induces dermonecrosis, hemolysis, increased vascular permeability, edema, inflammatory response, and platelet aggregation. In Loxosceles sabina (Tucson recluse spider), this protein is Dermonecrotic toxin LsaSicTox-alphaIB2i.